The primary structure comprises 1429 residues: Alpha-agarase (1429 aa).

The signal sequence occupies residues methionine 1 to alanine 26. CBM6 domains are found at residues leucine 29–threonine 161 and phenylalanine 211–threonine 345. 2 disordered regions span residues serine 349–serine 400 and asparagine 474–glycine 495. Positions serine 369–threonine 378 are enriched in polar residues. Residues asparagine 490 to asparagine 638 form the PA14 domain. One can recognise a CBM6 3 domain in the interval isoleucine 662–alanine 793.

The protein belongs to the glycosyl hydrolase 96 family. As to quaternary structure, homodimer. Requires Ca(2+) as cofactor.

The catalysed reaction is Endohydrolysis of 1,3-alpha-L-galactosidic linkages in agarose, yielding agarotetraose as the major product.. Its function is as follows. Alpha-agarase. Does not hydrolyze agarotetraose, agarohexaose, kappa-carrageenan, iota-carrageenan or lambda-carrageenan. In Alteromonas agarilytica, this protein is Alpha-agarase.